We begin with the raw amino-acid sequence, 362 residues long: Type-2 angiotensin II receptor (362 aa).

Residues 1 to 44 (MKANFSLATISKNITSSLHVGFVNISSNESTFNCSHKPSDKHLD) lie on the Extracellular side of the membrane. 5 N-linked (GlcNAc...) asparagine glycosylation sites follow: Asn-4, Asn-13, Asn-24, Asn-28, and Asn-33. Intrachain disulfides connect Cys-34-Cys-289 and Cys-116-Cys-194. The helical transmembrane segment at 45–69 (AIPVLYYIIFGVGFLVNTIVVTLFC) threads the bilayer. The Cytoplasmic portion of the chain corresponds to 70–79 (CQKGPKKVSS). A helical transmembrane segment spans residues 80–103 (IYIFNLAVADLLLLATLPLWATYY). The angiotensin II site is built by Tyr-102 and Tyr-103. Residues 104 to 113 (SHRYDWIFGP) lie on the Extracellular side of the membrane. The chain crosses the membrane as a helical span at residues 114–139 (VMCKVFGSFLTLNMFASIFFITCMSV). Residues 140–158 (DRYQSVIYPFLSQRRNPWQ) lie on the Cytoplasmic side of the membrane. Residues 159–180 (ASYIVPLVWCMACLSSLPTFYF) form a helical membrane-spanning segment. Angiotensin II-binding residues include Arg-181, Tyr-203, and Lys-214. At 181 to 205 (RDVRTIEYLGVNACIMAFPPEKYAQ) the chain is on the extracellular side. The helical transmembrane segment at 206-231 (WSAGIALMKNILGFIIPLIFIATCYF) threads the bilayer. The Cytoplasmic portion of the chain corresponds to 232 to 256 (GIRKHLLKTNSYGKNRITRDQVLKM). A helical membrane pass occupies residues 257 to 280 (AAAVVLAFIICWLPFHVLTFLDAL). Asp-278 contributes to the angiotensin II binding site. At 281–293 (AWMGVINSCEVIA) the chain is on the extracellular side. The helical transmembrane segment at 294–319 (VIDLALPFAILLGFTNSCINPFLYCF) threads the bilayer. Residue Asp-296 participates in angiotensin II binding. The Cytoplasmic portion of the chain corresponds to 320–362 (VGNRFQQKLRRVFRVPITWLQGKRENGSCGKSSSFREMETFVS). Residues 323–332 (RFQQKLRRVF) are helix VIII.

The protein belongs to the G-protein coupled receptor 1 family. As to quaternary structure, interacts with MTUS1.

The protein localises to the cell membrane. Receptor for angiotensin II, a vasoconstricting peptide. Signals primarily via a non-canonical G-protein- and beta-arrestin independent pathways. Cooperates with MTUS1 to inhibit ERK2 activation and cell proliferation. The protein is Type-2 angiotensin II receptor (AGTR2) of Ovis aries (Sheep).